A 635-amino-acid chain; its full sequence is Threonine--tRNA ligase (635 aa).

Residues 1–61 (MIAITLPDGS…DRDAELAIVT (61 aa)) enclose the TGS domain. The catalytic stretch occupies residues 242-533 (DHRKLGKTLD…LLENHAGALP (292 aa)). Zn(2+) is bound by residues cysteine 333, histidine 384, and histidine 510.

It belongs to the class-II aminoacyl-tRNA synthetase family. In terms of assembly, homodimer. Zn(2+) is required as a cofactor.

Its subcellular location is the cytoplasm. The catalysed reaction is tRNA(Thr) + L-threonine + ATP = L-threonyl-tRNA(Thr) + AMP + diphosphate + H(+). In terms of biological role, catalyzes the attachment of threonine to tRNA(Thr) in a two-step reaction: L-threonine is first activated by ATP to form Thr-AMP and then transferred to the acceptor end of tRNA(Thr). Also edits incorrectly charged L-seryl-tRNA(Thr). The protein is Threonine--tRNA ligase of Cupriavidus necator (strain ATCC 17699 / DSM 428 / KCTC 22496 / NCIMB 10442 / H16 / Stanier 337) (Ralstonia eutropha).